The sequence spans 202 residues: NADH-quinone oxidoreductase subunit C (202 aa).

This sequence belongs to the complex I 30 kDa subunit family. NDH-1 is composed of 14 different subunits. Subunits NuoB, C, D, E, F, and G constitute the peripheral sector of the complex.

Its subcellular location is the cell inner membrane. The enzyme catalyses a quinone + NADH + 5 H(+)(in) = a quinol + NAD(+) + 4 H(+)(out). NDH-1 shuttles electrons from NADH, via FMN and iron-sulfur (Fe-S) centers, to quinones in the respiratory chain. The immediate electron acceptor for the enzyme in this species is believed to be ubiquinone. Couples the redox reaction to proton translocation (for every two electrons transferred, four hydrogen ions are translocated across the cytoplasmic membrane), and thus conserves the redox energy in a proton gradient. This Hyphomonas neptunium (strain ATCC 15444) protein is NADH-quinone oxidoreductase subunit C.